Reading from the N-terminus, the 217-residue chain is Probable transaldolase (217 aa).

Catalysis depends on Lys83, which acts as the Schiff-base intermediate with substrate.

It belongs to the transaldolase family. Type 3B subfamily.

It is found in the cytoplasm. The catalysed reaction is D-sedoheptulose 7-phosphate + D-glyceraldehyde 3-phosphate = D-erythrose 4-phosphate + beta-D-fructose 6-phosphate. The protein operates within carbohydrate degradation; pentose phosphate pathway; D-glyceraldehyde 3-phosphate and beta-D-fructose 6-phosphate from D-ribose 5-phosphate and D-xylulose 5-phosphate (non-oxidative stage): step 2/3. Functionally, transaldolase is important for the balance of metabolites in the pentose-phosphate pathway. The chain is Probable transaldolase from Rhizorhabdus wittichii (strain DSM 6014 / CCUG 31198 / JCM 15750 / NBRC 105917 / EY 4224 / RW1) (Sphingomonas wittichii).